A 208-amino-acid polypeptide reads, in one-letter code: NAD(P)H-quinone oxidoreductase subunit I (208 aa).

2 consecutive 4Fe-4S ferredoxin-type domains span residues 55–84 and 95–124; these read GRIHYEFDKCIACEVCVRVCPINLPVVDWV and RNYSIDFGVCIFCGNCVEYCPTNCLSMTEE. Cysteine 64, cysteine 67, cysteine 70, cysteine 74, cysteine 104, cysteine 107, cysteine 110, and cysteine 114 together coordinate [4Fe-4S] cluster.

This sequence belongs to the complex I 23 kDa subunit family. In terms of assembly, NDH-1 is composed of at least 11 different subunits. It depends on [4Fe-4S] cluster as a cofactor.

It localises to the cellular thylakoid membrane. It carries out the reaction a plastoquinone + NADH + (n+1) H(+)(in) = a plastoquinol + NAD(+) + n H(+)(out). It catalyses the reaction a plastoquinone + NADPH + (n+1) H(+)(in) = a plastoquinol + NADP(+) + n H(+)(out). Functionally, NDH-1 shuttles electrons from an unknown electron donor, via FMN and iron-sulfur (Fe-S) centers, to quinones in the respiratory and/or the photosynthetic chain. The immediate electron acceptor for the enzyme in this species is believed to be plastoquinone. Couples the redox reaction to proton translocation, and thus conserves the redox energy in a proton gradient. This chain is NAD(P)H-quinone oxidoreductase subunit I, found in Prochlorococcus marinus subsp. pastoris (strain CCMP1986 / NIES-2087 / MED4).